Reading from the N-terminus, the 137-residue chain is MLVPKRVKHRREFRGKMRGEAKGGKEVAFGEYGLQATTSHWITNRQIEAARIAMTRYMKRGGKVWIKIFPHKSYTAKAIGVRMGSGKGAPEGWVAPVKRGKVMFEIAGVSEEIAREALRLASHKLPVKCKFVKREAE.

The protein belongs to the universal ribosomal protein uL16 family. Part of the 50S ribosomal subunit.

Functionally, binds 23S rRNA and is also seen to make contacts with the A and possibly P site tRNAs. This Streptococcus pneumoniae serotype 2 (strain D39 / NCTC 7466) protein is Large ribosomal subunit protein uL16.